Consider the following 388-residue polypeptide: Ribonucleoside-diphosphate reductase subunit beta (388 aa).

Residues aspartate 84, glutamate 115, and histidine 118 each contribute to the Fe cation site. Tyrosine 122 is a catalytic residue. Fe cation is bound by residues glutamate 212, glutamate 247, and histidine 250.

It belongs to the ribonucleoside diphosphate reductase small chain family. Heterodimer of a large and a small subunit. Requires Fe cation as cofactor.

The enzyme catalyses a 2'-deoxyribonucleoside 5'-diphosphate + [thioredoxin]-disulfide + H2O = a ribonucleoside 5'-diphosphate + [thioredoxin]-dithiol. Functionally, provides the precursors necessary for DNA synthesis. Catalyzes the biosynthesis of deoxyribonucleotides from the corresponding ribonucleotides. The sequence is that of Ribonucleoside-diphosphate reductase subunit beta (NRDB) from Escherichia coli (Bacteriophage T4).